Here is a 78-residue protein sequence, read N- to C-terminus: uncharacterized protein (78 aa).

The N-terminal stretch at methionine 1–alanine 45 is a signal peptide.

To E.coli YkfL.

This is an uncharacterized protein from Escherichia coli (strain K12).